The chain runs to 224 residues: Putative carbamate hydrolase RutD (224 aa).

In terms of domain architecture, AB hydrolase-1 spans 14-115; that stretch reads PVVVLISGLG…TVLVSVNGWL (102 aa).

The protein belongs to the AB hydrolase superfamily. Hydrolase RutD family.

The enzyme catalyses carbamate + 2 H(+) = NH4(+) + CO2. Its function is as follows. Involved in pyrimidine catabolism. May facilitate the hydrolysis of carbamate, a reaction that can also occur spontaneously. The polypeptide is Putative carbamate hydrolase RutD (Shigella dysenteriae serotype 1 (strain Sd197)).